We begin with the raw amino-acid sequence, 147 residues long: Large ribosomal subunit protein uL15 (147 aa).

Residues 1-54 form a disordered region; that stretch reads MRLSDIKPTPGSMKKRTRVGRGIGSGKGKTSGKGHKGQKARGRGKVHPWFEGGQ. Residues 30 to 46 show a composition bias toward basic residues; the sequence is TSGKGHKGQKARGRGKV.

It belongs to the universal ribosomal protein uL15 family. In terms of assembly, part of the 50S ribosomal subunit.

Binds to the 23S rRNA. The protein is Large ribosomal subunit protein uL15 of Thermosipho melanesiensis (strain DSM 12029 / CIP 104789 / BI429).